The chain runs to 287 residues: Universal stress protein Slr1230 (287 aa).

Belongs to the universal stress protein A family.

This chain is Universal stress protein Slr1230, found in Synechocystis sp. (strain ATCC 27184 / PCC 6803 / Kazusa).